The chain runs to 280 residues: UPF0750 membrane protein YitT (280 aa).

4 helical membrane-spanning segments follow: residues 9 to 29 (LLIVIIGALLNAAGLNLFLIP), 54 to 74 (FYISTGTLLFLLNIPVGILGW), 80 to 100 (SFTVYSILSVALTTLFMGILP), and 151 to 171 (VGTYFFILNGIIILTAGLLQG).

The protein belongs to the UPF0750 family.

It is found in the cell membrane. In Bacillus subtilis (strain 168), this protein is UPF0750 membrane protein YitT (yitT).